The sequence spans 386 residues: 2-isopropylmalate synthase (386 aa).

Positions 12 to 265 (VRIFDTTLRD…DVGVRTYLLY (254 aa)) constitute a Pyruvate carboxyltransferase domain. 4 residues coordinate a divalent metal cation: Asp-21, His-203, His-205, and Asn-239.

It belongs to the alpha-IPM synthase/homocitrate synthase family. In terms of assembly, homodimer. It depends on a divalent metal cation as a cofactor.

It catalyses the reaction 3-methyl-2-oxobutanoate + acetyl-CoA + H2O = (2S)-2-isopropylmalate + CoA + H(+). It functions in the pathway amino-acid biosynthesis; L-leucine biosynthesis; L-leucine from 3-methyl-2-oxobutanoate: step 1/4. Its activity is regulated as follows. Is not inhibited by leucine. Functionally, catalyzes the condensation of the acetyl group of acetyl-CoA with 3-methyl-2-oxobutanoate (2-oxoisovalerate) to form 3-carboxy-3-hydroxy-4-methylpentanoate (2-isopropylmalate). Carries out the first step of the leucine biosynthesis pathway. Also displays a low citramalate synthase activity, using pyruvate as substrate, but is unable to use 2-oxoglutarate. The sequence is that of 2-isopropylmalate synthase from Sulfolobus acidocaldarius (strain ATCC 33909 / DSM 639 / JCM 8929 / NBRC 15157 / NCIMB 11770).